Here is a 155-residue protein sequence, read N- to C-terminus: Small ribosomal subunit protein uS7c (155 aa).

It belongs to the universal ribosomal protein uS7 family. Part of the 30S ribosomal subunit.

The protein resides in the plastid. Its subcellular location is the chloroplast. One of the primary rRNA binding proteins, it binds directly to 16S rRNA where it nucleates assembly of the head domain of the 30S subunit. In Canella winterana (Wild cinnamon), this protein is Small ribosomal subunit protein uS7c (rps7).